Reading from the N-terminus, the 169-residue chain is Flagellar biosynthetic protein FliU (169 aa).

This sequence belongs to the FliB family.

Its function is as follows. Required for the secretion of flagellin and expression of motility. This chain is Flagellar biosynthetic protein FliU (fliU), found in Salmonella muenchen.